Consider the following 112-residue polypeptide: uncharacterized protein (112 aa).

2 helical membrane passes run 7–26 and 36–58; these read PSFH…TLDY and TYMH…FFLY.

The protein localises to the membrane. This is an uncharacterized protein from Saccharomyces cerevisiae (strain ATCC 204508 / S288c) (Baker's yeast).